We begin with the raw amino-acid sequence, 473 residues long: Bifunctional protein HldE (473 aa).

Positions 1–318 are ribokinase; sequence MKLSMPRFDQ…RAIQREEGSE (318 aa). 194–197 serves as a coordination point for ATP; the sequence is NLSE. Residue Asp-263 is part of the active site. The cytidylyltransferase stretch occupies residues 343–473; that stretch reads FTNGCFDILH…TAIVEKIRKN (131 aa).

In the N-terminal section; belongs to the carbohydrate kinase PfkB family. The protein in the C-terminal section; belongs to the cytidylyltransferase family. As to quaternary structure, homodimer.

The enzyme catalyses D-glycero-beta-D-manno-heptose 7-phosphate + ATP = D-glycero-beta-D-manno-heptose 1,7-bisphosphate + ADP + H(+). The catalysed reaction is D-glycero-beta-D-manno-heptose 1-phosphate + ATP + H(+) = ADP-D-glycero-beta-D-manno-heptose + diphosphate. The protein operates within nucleotide-sugar biosynthesis; ADP-L-glycero-beta-D-manno-heptose biosynthesis; ADP-L-glycero-beta-D-manno-heptose from D-glycero-beta-D-manno-heptose 7-phosphate: step 1/4. It participates in nucleotide-sugar biosynthesis; ADP-L-glycero-beta-D-manno-heptose biosynthesis; ADP-L-glycero-beta-D-manno-heptose from D-glycero-beta-D-manno-heptose 7-phosphate: step 3/4. Catalyzes the phosphorylation of D-glycero-D-manno-heptose 7-phosphate at the C-1 position to selectively form D-glycero-beta-D-manno-heptose-1,7-bisphosphate. Functionally, catalyzes the ADP transfer from ATP to D-glycero-beta-D-manno-heptose 1-phosphate, yielding ADP-D-glycero-beta-D-manno-heptose. This chain is Bifunctional protein HldE, found in Pseudomonas putida (strain ATCC 47054 / DSM 6125 / CFBP 8728 / NCIMB 11950 / KT2440).